Here is a 58-residue protein sequence, read N- to C-terminus: Large ribosomal subunit protein uL30 (58 aa).

The protein belongs to the universal ribosomal protein uL30 family. As to quaternary structure, part of the 50S ribosomal subunit.

The sequence is that of Large ribosomal subunit protein uL30 from Erythrobacter litoralis (strain HTCC2594).